The chain runs to 569 residues: Urease subunit alpha (569 aa).

In terms of domain architecture, Urease spans 131–569; that stretch reads GGIDTHIHFI…LPMAQRYFLL (439 aa). H136, H138, and K219 together coordinate Ni(2+). K219 carries the post-translational modification N6-carboxylysine. H221 is a binding site for substrate. The Ni(2+) site is built by H248 and H274. Residue H322 is the Proton donor of the active site. Residue D362 participates in Ni(2+) binding.

It belongs to the metallo-dependent hydrolases superfamily. Urease alpha subunit family. Heterotrimer of UreA (gamma), UreB (beta) and UreC (alpha) subunits. Three heterotrimers associate to form the active enzyme. Requires Ni cation as cofactor. Carboxylation allows a single lysine to coordinate two nickel ions.

Its subcellular location is the cytoplasm. The catalysed reaction is urea + 2 H2O + H(+) = hydrogencarbonate + 2 NH4(+). Its pathway is nitrogen metabolism; urea degradation; CO(2) and NH(3) from urea (urease route): step 1/1. The protein is Urease subunit alpha of Synechococcus sp. (strain RCC307).